The sequence spans 784 residues: Cas scaffolding protein family member 4 (784 aa).

An SH3 domain is found at 11–73; sequence PKALLARALY…PANRLQILEE (63 aa). Phosphoserine is present on residues S197, S246, S302, S373, and S387. The interval 343-376 is disordered; sequence TPNIYDVPRAMPDVPQAGKELGKAGGPSENSVDH. A coiled-coil region spans residues 466–536; the sequence is RDSLEANIDA…LLETKERLES (71 aa). Residues 614–635 are disordered; it reads KEGESYQRKAPFQKQRASEQPP.

This sequence belongs to the CAS family. In terms of assembly, interacts (via SH3 domain) with PTK2/FAK1 (via C-terminus). In terms of processing, phosphorylated on tyrosines by SRC.

The protein localises to the cytoplasm. It localises to the cytoskeleton. Its subcellular location is the cell junction. The protein resides in the focal adhesion. In terms of biological role, docking protein that plays a role in tyrosine kinase-based signaling related to cell adhesion and cell spreading. Regulates PTK2/FAK1 activity, focal adhesion integrity, and cell spreading. The chain is Cas scaffolding protein family member 4 from Sus scrofa (Pig).